The primary structure comprises 163 residues: Calcium-binding protein I (163 aa).

3 EF-hand domains span residues 20 to 42 (DKNK…NSKN), 82 to 117 (KPEI…LGCG), and 118 to 153 (NSKK…LKQD). The Ca(2+) site is built by aspartate 95, asparagine 97, aspartate 99, methionine 101, glutamate 106, aspartate 131, asparagine 133, glutamate 135, serine 137, and aspartate 142.

The sequence is that of Calcium-binding protein I (cbpI) from Dictyostelium discoideum (Social amoeba).